Here is an 82-residue protein sequence, read N- to C-terminus: M-theraphotoxin-Gr1a (82 aa).

An N-terminal signal peptide occupies residues 1 to 21 (MKTSVVFVIAGLALLSVVCYA). Residues 22 to 46 (SELKEQSSVNEVLSTIFHFEQPEER) constitute a propeptide that is removed on maturation. 3 disulfides stabilise this stretch: Cys48/Cys63, Cys55/Cys69, and Cys62/Cys76. Position 80 is a phenylalanine amide (Phe80).

Belongs to the neurotoxin 10 (Hwtx-1) family. 52 (MTx4) subfamily. In terms of tissue distribution, expressed by the venom gland.

The protein resides in the secreted. In terms of biological role, this cationic hydrophobic peptide acts on a lot of different channels and has an antimicrobial activity. It blocks mechanosensitive ion channels (also named stretch-activated channels or SACs), without having effect on whole-cell voltage-sensitive currents. It also affects acetylcholine receptors (nAChRs) through interactions with membrane lipids by prolonging the closing time without affecting channel conductance or opening activity. It shows high affinity for lipid bilayers. It acts by partitioning into the membrane and perturbing the interface between the channel and the lipid bilayer without necessarily being in physical contact with the channel. It inhibits atrial fibrillation as well as the membrane motor of outer hair cells at low doses. It also binds to the voltage sensor of voltage-gated potassium channels from the archaebacterium Aeropyrum pernix (KvAP) without affecting channel gating. It also shows a low inhibition on a large spectra of sodium channels (Nav1.1/SCN1A, Nav1.2/SCN2A, Nav1.3/SCN3A, Nav1.4/SCN4A, Nav1.5/SCN5A, Nav1.6/SCN8A, Nav1.7/SCN9A) (IC(50)=7.4-14 uM), and potassium channels Kv11.1/KCNH2 and Kv11.2/KCNH6 (IC(50)=11 uM for both). It exhibits antimicrobial activities against the Gram-positive bacteria B.subtilis (MIC=0.5 uM), S.aureus (MIC=2-4 uM), and S.epidermidis (MIC=4-8 uM), and Gram-negative bacteria S.typhimurium (MIC=32.64 uM), P.aeruginosa (MIC=8-16 uM), and E.coli (MIC=8-16 uM). This is M-theraphotoxin-Gr1a from Grammostola rosea (Chilean rose tarantula).